We begin with the raw amino-acid sequence, 378 residues long: Mevalonate kinase (378 aa).

ATP contacts are provided by residues Lys-10, Ser-138, and 143–149 (GSGLGSS). Residues Ser-149 and Glu-193 each contribute to the Mg(2+) site. Residue Asp-204 is the Proton acceptor of the active site.

This sequence belongs to the GHMP kinase family. Mevalonate kinase subfamily. The cofactor is Mg(2+).

The protein resides in the cytoplasm. It carries out the reaction (R)-mevalonate + ATP = (R)-5-phosphomevalonate + ADP + H(+). It participates in isoprenoid biosynthesis; isopentenyl diphosphate biosynthesis via mevalonate pathway; isopentenyl diphosphate from (R)-mevalonate: step 1/3. Its activity is inhibited in vitro by geranyl pyrophosphate (GPP) and farnesyl pyrophosphate (FPP) that bind competitively at the ATP-binding site on the enzyme. Its function is as follows. Catalyzes the phosphorylation of mevalonate to mevalonate 5-phosphate, a key step in isoprenoid and cholesterol biosynthesis. The protein is Mevalonate kinase of Arabidopsis thaliana (Mouse-ear cress).